The primary structure comprises 380 residues: Cystathionine beta-lyase (380 aa).

At lysine 196 the chain carries N6-(pyridoxal phosphate)lysine.

It belongs to the trans-sulfuration enzymes family. Pyridoxal 5'-phosphate is required as a cofactor.

The protein localises to the cytoplasm. It catalyses the reaction L,L-cystathionine + H2O = L-homocysteine + pyruvate + NH4(+). It carries out the reaction an S-substituted L-cysteine + H2O = a thiol + pyruvate + NH4(+). The protein operates within amino-acid biosynthesis; L-methionine biosynthesis via de novo pathway; L-homocysteine from L-cystathionine: step 1/1. Its function is as follows. The enzymatic degradation of amino acids in cheese is believed to generate aroma compounds and therefore to be essential for flavor development. Cystathionine beta-lyase (CBL) can convert cystathionine to homocysteine but is also able to catalyze an alpha, gamma elimination. With methionine as a substrate, it produces volatile sulfur compounds which are important for flavor formation in Gouda cheese. This Lactococcus lactis subsp. lactis (strain IL1403) (Streptococcus lactis) protein is Cystathionine beta-lyase (metC).